We begin with the raw amino-acid sequence, 430 residues long: Histidine--tRNA ligase, chloroplastic (430 aa).

It belongs to the class-II aminoacyl-tRNA synthetase family.

It is found in the plastid. Its subcellular location is the chloroplast. It catalyses the reaction tRNA(His) + L-histidine + ATP = L-histidyl-tRNA(His) + AMP + diphosphate + H(+). The sequence is that of Histidine--tRNA ligase, chloroplastic from Pyropia yezoensis (Susabi-nori).